A 472-amino-acid chain; its full sequence is Putative F-box/LRR-repeat protein At5g54820 (472 aa).

In terms of domain architecture, F-box spans 6 to 54 (QDRLSSLPDILLIMIISFLPLKECVRTSVLSKRWRYLCLETTNLSFKES). LRR repeat units follow at residues 58–87 (NPDI…SITQ), 135–164 (NGDI…KIYG), 183–208 (IGWV…SIKN), 225–250 (VIEH…KYSG), 283–308 (SSRI…TVCP), and 338–363 (MHTK…GFDI).

The chain is Putative F-box/LRR-repeat protein At5g54820 from Arabidopsis thaliana (Mouse-ear cress).